The chain runs to 149 residues: Small ribosomal subunit protein uS13 (149 aa).

Residues 118–149 (GRRHELGLPVRGQRTKSTFRKGSSVGVRRKKR) form a disordered region.

The protein belongs to the universal ribosomal protein uS13 family. Part of the 30S ribosomal subunit. Forms a loose heterodimer with protein S19. Forms two bridges to the 50S subunit in the 70S ribosome.

Located at the top of the head of the 30S subunit, it contacts several helices of the 16S rRNA. In the 70S ribosome it contacts the 23S rRNA (bridge B1a) and protein L5 of the 50S subunit (bridge B1b), connecting the 2 subunits; these bridges are implicated in subunit movement. This Methanothermobacter thermautotrophicus (strain ATCC 29096 / DSM 1053 / JCM 10044 / NBRC 100330 / Delta H) (Methanobacterium thermoautotrophicum) protein is Small ribosomal subunit protein uS13.